The primary structure comprises 418 residues: Tyrosine--tRNA ligase (418 aa).

Residue Tyr34 participates in L-tyrosine binding. Positions 39-48 match the 'HIGH' region motif; the sequence is PTGDSMHIGH. The L-tyrosine site is built by Tyr166 and Gln170. Positions 228–232 match the 'KMSKS' region motif; the sequence is KFGKT. Position 231 (Lys231) interacts with ATP. The region spanning 350 to 417 is the S4 RNA-binding domain; that stretch reads TNIVELLTET…KKNYFLAKVK (68 aa).

This sequence belongs to the class-I aminoacyl-tRNA synthetase family. TyrS type 1 subfamily. As to quaternary structure, homodimer.

It is found in the cytoplasm. It carries out the reaction tRNA(Tyr) + L-tyrosine + ATP = L-tyrosyl-tRNA(Tyr) + AMP + diphosphate + H(+). Catalyzes the attachment of tyrosine to tRNA(Tyr) in a two-step reaction: tyrosine is first activated by ATP to form Tyr-AMP and then transferred to the acceptor end of tRNA(Tyr). In Levilactobacillus brevis (Lactobacillus brevis), this protein is Tyrosine--tRNA ligase.